Reading from the N-terminus, the 103-residue chain is Small ribosomal subunit protein uS10 (103 aa).

The protein belongs to the universal ribosomal protein uS10 family. In terms of assembly, part of the 30S ribosomal subunit.

In terms of biological role, involved in the binding of tRNA to the ribosomes. This Baumannia cicadellinicola subsp. Homalodisca coagulata protein is Small ribosomal subunit protein uS10.